The primary structure comprises 1059 residues: RNA-binding protein 26 (1059 aa).

Composition is skewed to basic and acidic residues over residues 98 to 114 (EKEI…EKEK) and 130 to 147 (RHKD…DRES). Residues 98 to 275 (EKEIKKDEVN…PVDNSYASGS (178 aa)) form a disordered region. The segment covering 172–182 (LNSNKVQNAKN) has biased composition (polar residues). Residues 184 to 213 (RSRDDRKRDDRFRKREYDRNVPRRDSYRDR) are compositionally biased toward basic and acidic residues. Positions 214–231 (YNRRRGRSRSYSRSRSRS) are enriched in basic residues. The segment covering 232 to 266 (WSKERQRDRDRSRSRTRSRDKDSGKPKFDLDRPDP) has biased composition (basic and acidic residues). Residues 327-355 (QMQKKRCRDYDEKGFCMRGDMCPFDHGSD) form a C3H1-type zinc finger. Residues 375–428 (PVLEGPPPPGLPPPPSLLTPPPVNLQPPPVPPPGPLPPSLPPVTGPPPPLPPLQ) show a composition bias toward pro residues. The segment at 375 to 443 (PVLEGPPPPG…APPNSATSSV (69 aa)) is disordered. The segment covering 434–443 (APPNSATSSV) has biased composition (low complexity). The region spanning 581-655 (TKLELRRIPP…RFIRMYWHRE (75 aa)) is the RRM 1 domain. Positions 771 to 873 (GDAQKKKQEA…LLDTELDLYN (103 aa)) form a coiled coil. One can recognise an RRM 2 domain in the interval 942–1011 (RALKISGFTE…QDLKLAWNKP (70 aa)). The interval 1010–1059 (KPVPNASSTEVEDADQEEEEFHEDSIVDDSLLQDDDEEEEDDNESRSWRR) is disordered. Composition is skewed to acidic residues over residues 1019–1031 (EVED…EEFH) and 1040–1052 (LLQD…EDDN).

Functionally, may be involved in the turnover of nuclear polyadenylated (pA+) RNA. This chain is RNA-binding protein 26, found in Xenopus laevis (African clawed frog).